The chain runs to 313 residues: 4-diphosphocytidyl-2-C-methyl-D-erythritol kinase (313 aa).

Lys-29 is an active-site residue. 113–123 (PMGGGVGGGSS) contributes to the ATP binding site. The active site involves Asp-155.

The protein belongs to the GHMP kinase family. IspE subfamily.

The enzyme catalyses 4-CDP-2-C-methyl-D-erythritol + ATP = 4-CDP-2-C-methyl-D-erythritol 2-phosphate + ADP + H(+). Its pathway is isoprenoid biosynthesis; isopentenyl diphosphate biosynthesis via DXP pathway; isopentenyl diphosphate from 1-deoxy-D-xylulose 5-phosphate: step 3/6. In terms of biological role, catalyzes the phosphorylation of the position 2 hydroxy group of 4-diphosphocytidyl-2C-methyl-D-erythritol. The chain is 4-diphosphocytidyl-2-C-methyl-D-erythritol kinase from Haemophilus influenzae (strain ATCC 51907 / DSM 11121 / KW20 / Rd).